Reading from the N-terminus, the 893-residue chain is Serine/threonine-protein kinase PLK4 (893 aa).

The Protein kinase domain occupies 12–265; the sequence is FRVGNLLGKG…LSSVLDHPFM (254 aa). Residues 18–26 and Lys41 contribute to the ATP site; that span reads LGKGSFAGV. Lys45 and Lys46 each carry N6-acetyllysine. The active-site Proton acceptor is the Asp136. Positions 349 to 358 are enriched in polar residues; the sequence is NQEQETSNSG. Residues 349 to 393 are disordered; sequence NQEQETSNSGRGRVIQEAEERPHSRYLRRAHSSDRSETSHGQSRV. Residues 362 to 371 show a composition bias toward basic and acidic residues; sequence VIQEAEERPH. A phosphoserine mark is found at Ser403 and Ser588. The Cryptic POLO box 1 (CPB1) domain occupies 509-622; that stretch reads TLRSITSPLT…SRFVQLVRSK (114 aa). A Cryptic POLO box 2 (CPB2) domain is found at 623–736; the sequence is SPKITYFTRY…GRRPSSTSSP (114 aa). The segment at 730 to 749 is disordered; sequence PSSTSSPKALTPPPPVDPNY. The POLO box domain occupies 809-887; that stretch reads QLLKSVFVKN…LSSILLMFSN (79 aa).

The protein belongs to the protein kinase superfamily. Ser/Thr protein kinase family. CDC5/Polo subfamily. In terms of assembly, homodimer. Interacts with CEP152 (via N-terminus). Interacts with CEP78; this interaction may be important for proper PLK4 localization to the centriole and PLK4-induced overduplication of centrioles. Interacts with CEP131. Interacts simultaneously with TENT5C and CEP192. Interacts with TENT5C; this interaction leads to the TENT5C recruitment in the centrosome. Interacts with CEP85; this interaction may be important in cell migration and centriole assembly. Post-translationally, ubiquitinated; leading to its degradation by the proteasome. Tyrosine-phosphorylated by TEC. In terms of processing, acetylation by KAT2A and KAT2B impairs kinase activity by shifting the kinase to an inactive conformation.

The protein localises to the cytoplasm. It localises to the cytoskeleton. It is found in the microtubule organizing center. Its subcellular location is the centrosome. The protein resides in the centriole. The protein localises to the nucleus. It localises to the nucleolus. It is found in the cleavage furrow. It catalyses the reaction L-seryl-[protein] + ATP = O-phospho-L-seryl-[protein] + ADP + H(+). The catalysed reaction is L-threonyl-[protein] + ATP = O-phospho-L-threonyl-[protein] + ADP + H(+). Serine/threonine-protein kinase that plays a central role in centriole duplication. Able to trigger procentriole formation on the surface of the parental centriole cylinder, leading to the recruitment of centriole biogenesis proteins such as SASS6, CPAP, CCP110, CEP135 and gamma-tubulin. When overexpressed, it is able to induce centrosome amplification through the simultaneous generation of multiple procentrioles adjoining each parental centriole during S phase. Phosphorylates 'Ser-151' of FBXW5 during the G1/S transition, leading to inhibit FBXW5 ability to ubiquitinate SASS6. Its central role in centriole replication suggests a possible role in tumorigenesis, centrosome aberrations being frequently observed in tumors. Also involved in deuterosome-mediated centriole amplification in multiciliated that can generate more than 100 centrioles. Also involved in trophoblast differentiation by phosphorylating HAND1, leading to disrupt the interaction between HAND1 and MDFIC and activate HAND1. Phosphorylates CDC25C and CHEK2. Required for the recruitment of STIL to the centriole and for STIL-mediated centriole amplification. Phosphorylates CEP131 and PCM1 which is essential for proper organization and integrity of centriolar satellites. This chain is Serine/threonine-protein kinase PLK4, found in Bos taurus (Bovine).